Reading from the N-terminus, the 88-residue chain is HssA/B-like protein 64 (88 aa).

Over residues 1–24 (MTLFSSISSMSSSMTSSKSSFASF) the composition is skewed to low complexity. Disordered regions lie at residues 1–25 (MTLFSSISSMSSSMTSSKSSFASFG) and 45–88 (GVSS…GNSC). Residues 56-66 (AKSGGDCGGKG) show a composition bias toward gly residues.

The protein belongs to the hssA/B family.

The sequence is that of HssA/B-like protein 64 (hssl64) from Dictyostelium discoideum (Social amoeba).